The following is a 918-amino-acid chain: Serine/threonine-protein kinase D1 (918 aa).

Residue Y93 is modified to Phosphotyrosine. A Phorbol-ester/DAG-type 1 zinc finger spans residues 144-194; that stretch reads PHALFVHSYRAPAFCDHCGEMLWGLVRQGLKCEGCGLNYHKRCAFKIPNNC. 4 positions are modified to phosphoserine: S203, S206, S217, and S221. Residues 276–326 form a Phorbol-ester/DAG-type 2 zinc finger; sequence PHTFVIHSYTRPTVCQFCKKLLKGLFRQGLQCKDCRFNCHKRCAPKVPNNC. 2 disordered regions span residues 338-362 and 380-408; these read SPGA…NSGL and EGQS…STSN. Acidic residues-rich tracts occupy residues 345-355 and 387-396; these read VVMEEGSDDND and EMQDPDADQE. Residue S351 is modified to Phosphoserine. Phosphoserine; by MAPK13 occurs at positions 403 and 407. Residues 428–547 enclose the PH domain; that stretch reads TVMKEGWMVH…WEVAIQHALM (120 aa). Y438 carries the phosphotyrosine modification. The residue at position 454 (S454) is a Phosphoserine. Residue Y469 is modified to Phosphotyrosine; by ABL. Phosphotyrosine is present on Y508. Residue S554 is modified to Phosphoserine. Residues 589–845 enclose the Protein kinase domain; that stretch reads IFPDEVLGSG…VDKTLSHPWL (257 aa). ATP contacts are provided by residues 595–603 and K618; that span reads LGSGQFGIV. The active-site Proton acceptor is the D712. Phosphoserine; by PKC/PRKCD is present on S744. Residue S748 is modified to Phosphoserine; by autocatalysis and PKC/PRKCD. Y755 carries the phosphotyrosine modification. Residue S916 is modified to Phosphoserine; by autocatalysis.

Belongs to the protein kinase superfamily. CAMK Ser/Thr protein kinase family. PKD subfamily. Interacts (via N-terminus) with ADAP1/CENTA1. Interacts with MAPK13. Interacts with DAPK1 in an oxidative stress-regulated manner. Interacts with USP28; the interaction induces phosphorylation of USP28 and activated KRAS-mediated stabilization of ZNF304. Interacts with AKAP13 (via C-terminal domain). Requires Mg(2+) as cofactor. In terms of processing, phosphorylated at Ser-403 and Ser-407 by MAPK13 during regulation of insulin secretion in pancreatic beta cells. Phosphorylated by DAPK1. Phosphorylated at Tyr-93 and by ABL at Tyr-469, which primes the kinase in response to oxidative stress, and promotes a second step activating phosphorylation at Ser-744/Ser-748 by PKRD. Phosphorylated on Ser-916 upon S.enterica infection in macrophages.

It localises to the cytoplasm. The protein localises to the cell membrane. Its subcellular location is the golgi apparatus. The protein resides in the trans-Golgi network. The enzyme catalyses L-seryl-[protein] + ATP = O-phospho-L-seryl-[protein] + ADP + H(+). It carries out the reaction L-threonyl-[protein] + ATP = O-phospho-L-threonyl-[protein] + ADP + H(+). Its activity is regulated as follows. Activated by DAG and phorbol esters. Phorbol-ester/DAG-type domain 1 binds DAG with high affinity and appears to play the dominant role in mediating translocation to the cell membrane and trans-Golgi network. Phorbol-ester/DAG-type domain 2 binds phorbol ester with higher affinity. Autophosphorylation of Ser-748 and phosphorylation of Ser-744 by PKC relieves auto-inhibition by the PH domain. Phosphorylation on Tyr-469 by the SRC-ABL1 pathway in response to oxidative stress, is also required for activation. Activated by DAPK1 under oxidative stress. Functionally, serine/threonine-protein kinase that converts transient diacylglycerol (DAG) signals into prolonged physiological effects downstream of PKC, and is involved in the regulation of MAPK8/JNK1 and Ras signaling, Golgi membrane integrity and trafficking, cell survival through NF-kappa-B activation, cell migration, cell differentiation by mediating HDAC7 nuclear export, cell proliferation via MAPK1/3 (ERK1/2) signaling, and plays a role in cardiac hypertrophy, VEGFA-induced angiogenesis, genotoxic-induced apoptosis and flagellin-stimulated inflammatory response. Phosphorylates the epidermal growth factor receptor (EGFR) on dual threonine residues, which leads to the suppression of epidermal growth factor (EGF)-induced MAPK8/JNK1 activation and subsequent JUN phosphorylation. Phosphorylates RIN1, inducing RIN1 binding to 14-3-3 proteins YWHAB, YWHAE and YWHAZ and increased competition with RAF1 for binding to GTP-bound form of Ras proteins (NRAS, HRAS and KRAS). Acts downstream of the heterotrimeric G-protein beta/gamma-subunit complex to maintain the structural integrity of the Golgi membranes, and is required for protein transport along the secretory pathway. In the trans-Golgi network (TGN), regulates the fission of transport vesicles that are on their way to the plasma membrane. May act by activating the lipid kinase phosphatidylinositol 4-kinase beta (PI4KB) at the TGN for the local synthesis of phosphorylated inositol lipids, which induces a sequential production of DAG, phosphatidic acid (PA) and lyso-PA (LPA) that are necessary for membrane fission and generation of specific transport carriers to the cell surface. Under oxidative stress, is phosphorylated at Tyr-469 via SRC-ABL1 and contributes to cell survival by activating IKK complex and subsequent nuclear translocation and activation of NFKB1. Involved in cell migration by regulating integrin alpha-5/beta-3 recycling and promoting its recruitment in newly forming focal adhesion. In osteoblast differentiation, mediates the bone morphogenetic protein 2 (BMP2)-induced nuclear export of HDAC7, which results in the inhibition of HDAC7 transcriptional repression of RUNX2. In neurons, plays an important role in neuronal polarity by regulating the biogenesis of TGN-derived dendritic vesicles, and is involved in the maintenance of dendritic arborization and Golgi structure in hippocampal cells. May potentiate mitogenesis induced by the neuropeptide bombesin or vasopressin by mediating an increase in the duration of MAPK1/3 (ERK1/2) signaling, which leads to accumulation of immediate-early gene products including FOS that stimulate cell cycle progression. Plays an important role in the proliferative response induced by low calcium in keratinocytes, through sustained activation of MAPK1/3 (ERK1/2) pathway. Downstream of novel PKC signaling, plays a role in cardiac hypertrophy by phosphorylating HDAC5, which in turn triggers XPO1/CRM1-dependent nuclear export of HDAC5, MEF2A transcriptional activation and induction of downstream target genes that promote myocyte hypertrophy and pathological cardiac remodeling. Mediates cardiac troponin I (TNNI3) phosphorylation at the PKA sites, which results in reduced myofilament calcium sensitivity, and accelerated crossbridge cycling kinetics. The PRKD1-HDAC5 pathway is also involved in angiogenesis by mediating VEGFA-induced specific subset of gene expression, cell migration, and tube formation. In response to VEGFA, is necessary and required for HDAC7 phosphorylation which induces HDAC7 nuclear export and endothelial cell proliferation and migration. During apoptosis induced by cytarabine and other genotoxic agents, PRKD1 is cleaved by caspase-3 at Asp-378, resulting in activation of its kinase function and increased sensitivity of cells to the cytotoxic effects of genotoxic agents. In epithelial cells, is required for transducing flagellin-stimulated inflammatory responses by binding and phosphorylating TLR5, which contributes to MAPK14/p38 activation and production of inflammatory cytokines. Acts as an activator of NLRP3 inflammasome assembly by mediating phosphorylation of NLRP3. May play a role in inflammatory response by mediating activation of NF-kappa-B. May be involved in pain transmission by directly modulating TRPV1 receptor. Plays a role in activated KRAS-mediated stabilization of ZNF304 in colorectal cancer (CRC) cells. Regulates nuclear translocation of transcription factor TFEB in macrophages upon live S.enterica infection. The polypeptide is Serine/threonine-protein kinase D1 (Prkd1) (Rattus norvegicus (Rat)).